Reading from the N-terminus, the 124-residue chain is Ribonuclease P protein component (124 aa).

Belongs to the RnpA family. Consists of a catalytic RNA component (M1 or rnpB) and a protein subunit.

The enzyme catalyses Endonucleolytic cleavage of RNA, removing 5'-extranucleotides from tRNA precursor.. Functionally, RNaseP catalyzes the removal of the 5'-leader sequence from pre-tRNA to produce the mature 5'-terminus. It can also cleave other RNA substrates such as 4.5S RNA. The protein component plays an auxiliary but essential role in vivo by binding to the 5'-leader sequence and broadening the substrate specificity of the ribozyme. The chain is Ribonuclease P protein component from Synechocystis sp. (strain ATCC 27184 / PCC 6803 / Kazusa).